The sequence spans 518 residues: GMP synthase [glutamine-hydrolyzing] (518 aa).

Residues 11-203 enclose the Glutamine amidotransferase type-1 domain; sequence KIIVLDFGSQ…AFDVCQARSN (193 aa). The Nucleophile role is filled by cysteine 88. Active-site residues include histidine 177 and glutamate 179. A GMPS ATP-PPase domain is found at 204 to 393; that stretch reads WSMDDFIDMQ…LGMPHELVWR (190 aa). 231–237 provides a ligand contact to ATP; the sequence is SGGVDSS.

In terms of assembly, homodimer.

The enzyme catalyses XMP + L-glutamine + ATP + H2O = GMP + L-glutamate + AMP + diphosphate + 2 H(+). Its pathway is purine metabolism; GMP biosynthesis; GMP from XMP (L-Gln route): step 1/1. Functionally, catalyzes the synthesis of GMP from XMP. The chain is GMP synthase [glutamine-hydrolyzing] from Ligilactobacillus salivarius (strain UCC118) (Lactobacillus salivarius).